Consider the following 224-residue polypeptide: BOS complex subunit TMEM147 (224 aa).

The chain crosses the membrane as a helical span at residues 1–21; sequence MTLFHFGNCFALAYFPYFITY. The Cytoplasmic portion of the chain corresponds to 22 to 34; that stretch reads KCSGLSEYNAFWK. Residues 35–58 traverse the membrane as a helical segment; the sequence is CVQAGVTYLFVQLCKMLFLATFFP. Over 59–66 the chain is Lumenal; that stretch reads TWEGGIYD. The chain crosses the membrane as a helical span at residues 67 to 88; the sequence is FIGEFMKASVDVADLIGLNLVM. The Cytoplasmic portion of the chain corresponds to 89–98; sequence SRNAGKGEYK. A helical membrane pass occupies residues 99 to 124; that stretch reads IMVAALGWATAELIMSRCIPLWVGAR. Over 125 to 129 the chain is Lumenal; it reads GIEFD. A helical membrane pass occupies residues 130 to 155; the sequence is WKYIQMSIDSNISLVHYIVASAQVWM. The Cytoplasmic portion of the chain corresponds to 156–164; it reads ITRYDLYHT. Residues 165 to 187 traverse the membrane as a helical segment; the sequence is FRPAVLLLMFLSVYKAFVMETFV. Over 188–194 the chain is Lumenal; it reads HLCSLGS. A helical transmembrane segment spans residues 195–216; it reads WTALLARAVVTGLLALSTLALY. Topologically, residues 217–224 are cytoplasmic; it reads VAVVNVHS.

It belongs to the TMEM147 family. In terms of assembly, component of the back of Sec61 (BOS) complex, composed of NCLN/Nicalin, NOMO1 and TMEM147. The BOS complex is part of the multi-pass translocon (MPT) complex, composed of three subcomplexes, the GEL complex (composed of RAB5IF/OPTI and TMCO1), the BOS complex (composed of NCLN/Nicalin, NOMO1 and TMEM147) and the PAT complex (composed of WDR83OS/Asterix and CCDC47). The MPT complex associates with the SEC61 complex. Interacts with CHRM3, CHRM1 and AVPR2. Interacts with LBR; promoting LBR localization to the nucleus inner membrane. Interacts with DHCR7.

The protein localises to the endoplasmic reticulum membrane. The protein resides in the nucleus membrane. Its subcellular location is the cell membrane. Component of the multi-pass translocon (MPT) complex that mediates insertion of multi-pass membrane proteins into the lipid bilayer of membranes. The MPT complex takes over after the SEC61 complex: following membrane insertion of the first few transmembrane segments of proteins by the SEC61 complex, the MPT complex occludes the lateral gate of the SEC61 complex to promote insertion of subsequent transmembrane regions. Also acts as a negative regulator of CHRM3 function, most likely by interfering with its trafficking to the cell membrane. Negatively regulates CHRM3-mediated calcium mobilization and activation of RPS6KA1/p90RSK activity. Regulates LBR localization to the nucleus inner membrane. The protein is BOS complex subunit TMEM147 of Canis lupus familiaris (Dog).